We begin with the raw amino-acid sequence, 459 residues long: Vacuolar amino acid transporter 5 (459 aa).

8 helical membrane passes run 8–28 (GVLT…PFAF), 33–53 (LMPG…GLLL), 82–102 (VVFD…YLII), 131–151 (FLDR…PLCF), 161–181 (ASMI…YHFV), 206–226 (LTTL…FSVI), 240–260 (IPIF…GTGY), and 278–298 (SIST…AFPL). Residues 335–351 (FNSEDPQEAPTQQNNEE) are compositionally biased toward polar residues. Residues 335-354 (FNSEDPQEAPTQQNNEEPNL) are disordered. A run of 3 helical transmembrane segments spans residues 364 to 384 (IITL…TSLA), 386 to 406 (VLAI…PGLF), and 434 to 454 (LSLF…IVFL).

It belongs to the amino acid/polyamine transporter 2 family.

Its subcellular location is the vacuole membrane. Functionally, probable amino acid transporter of unknown specificity. In Saccharomyces cerevisiae (strain ATCC 204508 / S288c) (Baker's yeast), this protein is Vacuolar amino acid transporter 5 (AVT5).